A 176-amino-acid chain; its full sequence is ATP-dependent protease subunit HslV (176 aa).

Thr-6 is a catalytic residue. Residues Ser-161, Cys-164, and Thr-167 each contribute to the Na(+) site.

It belongs to the peptidase T1B family. HslV subfamily. As to quaternary structure, a double ring-shaped homohexamer of HslV is capped on each side by a ring-shaped HslU homohexamer. The assembly of the HslU/HslV complex is dependent on binding of ATP.

It localises to the cytoplasm. The catalysed reaction is ATP-dependent cleavage of peptide bonds with broad specificity.. Its activity is regulated as follows. Allosterically activated by HslU binding. Its function is as follows. Protease subunit of a proteasome-like degradation complex believed to be a general protein degrading machinery. This Thermosipho africanus (strain TCF52B) protein is ATP-dependent protease subunit HslV.